The primary structure comprises 451 residues: UDP-N-acetylmuramoylalanine--D-glutamate ligase (451 aa).

Residue 119 to 125 (GSNGKTT) participates in ATP binding.

The protein belongs to the MurCDEF family.

It localises to the cytoplasm. It carries out the reaction UDP-N-acetyl-alpha-D-muramoyl-L-alanine + D-glutamate + ATP = UDP-N-acetyl-alpha-D-muramoyl-L-alanyl-D-glutamate + ADP + phosphate + H(+). It functions in the pathway cell wall biogenesis; peptidoglycan biosynthesis. Functionally, cell wall formation. Catalyzes the addition of glutamate to the nucleotide precursor UDP-N-acetylmuramoyl-L-alanine (UMA). The chain is UDP-N-acetylmuramoylalanine--D-glutamate ligase from Streptococcus agalactiae serotype Ia (strain ATCC 27591 / A909 / CDC SS700).